The chain runs to 319 residues: Pyrroline-5-carboxylate reductase 1, mitochondrial (319 aa).

Position 2 is an N-acetylserine (Ser-2). Residues 6-11 (IGAGQL) and Ser-34 each bind NADP(+). Positions 8, 10, 11, 34, 36, 56, 70, 71, and 97 each coordinate NADPH. NADP(+) is bound by residues Asn-56, 69 to 72 (AVKP), and 95 to 97 (CAA). Glu-164 lines the L-proline pocket. Asn-230 provides a ligand contact to NADPH. 2 residues coordinate L-proline: Ala-237 and Thr-238. 2 positions are modified to phosphoserine: Ser-278 and Ser-301. The disordered stretch occupies residues 294 to 319 (SPAGTALSPSGHTKLLPRSLAPAGKD).

Belongs to the pyrroline-5-carboxylate reductase family. Homodecamer; composed of 5 homodimers. Interacts with LTO1.

It localises to the mitochondrion. It carries out the reaction L-proline + NADP(+) = (S)-1-pyrroline-5-carboxylate + NADPH + 2 H(+). It catalyses the reaction L-proline + NAD(+) = (S)-1-pyrroline-5-carboxylate + NADH + 2 H(+). The protein operates within amino-acid biosynthesis; L-proline biosynthesis; L-proline from L-glutamate 5-semialdehyde: step 1/1. Its activity is regulated as follows. Subject to competitive inhibition by the reaction product proline. Subject to competitive inhibition by stearoyl coenzyme A. Oxidoreductase that catalyzes the last step in proline biosynthesis, which corresponds to the reduction of pyrroline-5-carboxylate to L-proline using NAD(P)H. At physiologic concentrations, has higher specific activity in the presence of NADH. Involved in the cellular response to oxidative stress. The protein is Pyrroline-5-carboxylate reductase 1, mitochondrial of Homo sapiens (Human).